The chain runs to 482 residues: tRNA sulfurtransferase (482 aa).

The THUMP domain maps to 61–165; it reads AEVLEILTHT…GDKLNQVLAR (105 aa). Residues 183 to 184, lysine 265, glycine 287, and glutamine 296 contribute to the ATP site; that span reads LI. A disulfide bridge connects residues cysteine 344 and cysteine 456. Residues 404–482 enclose the Rhodanese domain; sequence VEEHAVVLDI…GFNNVKVYRP (79 aa). Residue cysteine 456 is the Cysteine persulfide intermediate of the active site.

It belongs to the ThiI family.

It localises to the cytoplasm. The enzyme catalyses [ThiI sulfur-carrier protein]-S-sulfanyl-L-cysteine + a uridine in tRNA + 2 reduced [2Fe-2S]-[ferredoxin] + ATP + H(+) = [ThiI sulfur-carrier protein]-L-cysteine + a 4-thiouridine in tRNA + 2 oxidized [2Fe-2S]-[ferredoxin] + AMP + diphosphate. It carries out the reaction [ThiS sulfur-carrier protein]-C-terminal Gly-Gly-AMP + S-sulfanyl-L-cysteinyl-[cysteine desulfurase] + AH2 = [ThiS sulfur-carrier protein]-C-terminal-Gly-aminoethanethioate + L-cysteinyl-[cysteine desulfurase] + A + AMP + 2 H(+). It functions in the pathway cofactor biosynthesis; thiamine diphosphate biosynthesis. In terms of biological role, catalyzes the ATP-dependent transfer of a sulfur to tRNA to produce 4-thiouridine in position 8 of tRNAs, which functions as a near-UV photosensor. Also catalyzes the transfer of sulfur to the sulfur carrier protein ThiS, forming ThiS-thiocarboxylate. This is a step in the synthesis of thiazole, in the thiamine biosynthesis pathway. The sulfur is donated as persulfide by IscS. The polypeptide is tRNA sulfurtransferase (Vibrio parahaemolyticus serotype O3:K6 (strain RIMD 2210633)).